Consider the following 414-residue polypeptide: N-carbamoyl-L-amino-acid amidohydrolase (414 aa).

Positions 83, 94, 129, and 195 each coordinate a divalent metal cation. Positions 198, 231, 281, 294, and 363 each coordinate an N-carbamoyl-L-alpha-amino acid. The interval 214–333 (GIAGPSWFKV…QIEKNMAAVP (120 aa)) is involved in dimerization. Residue H388 coordinates a divalent metal cation.

This sequence belongs to the peptidase M20 family. As to quaternary structure, homodimer. Requires Mn(2+) as cofactor. The cofactor is Ni(2+). Co(2+) is required as a cofactor. Fe(2+) serves as cofactor.

It carries out the reaction an N-carbamoyl-L-alpha-amino acid + H2O + 2 H(+) = an L-alpha-amino acid + NH4(+) + CO2. The enzyme catalyses N-carbamoyl-L-methionine + H2O + 2 H(+) = L-methionine + NH4(+) + CO2. In terms of biological role, catalyzes the hydrolysis of N-carbamoyl-L-alpha-amino acids to free L-alpha-amino acids. Is strictly L-specific since it is inactive toward N-carbamoyl-D-alpha-amino acids. This Pseudomonas sp. (strain NS671) protein is N-carbamoyl-L-amino-acid amidohydrolase.